A 437-amino-acid chain; its full sequence is O-antigen export system ATP-binding protein RfbB (437 aa).

The ABC transporter domain occupies 37–256 (LRGKRQSRDA…YREAISLAEA (220 aa)). 69–76 (GRNGSGKS) lines the ATP pocket.

It belongs to the ABC transporter superfamily.

The protein resides in the cell inner membrane. May form an ATP-driven O-antigen export apparatus, in association with RfbA. This Myxococcus xanthus protein is O-antigen export system ATP-binding protein RfbB (rfbB).